The chain runs to 179 residues: NAD(P)H-quinone oxidoreductase subunit I, chloroplastic (179 aa).

2 consecutive 4Fe-4S ferredoxin-type domains span residues 55-84 (GRIHFEFDKCIACEVCVRVCPIDLPVVDWR) and 95-124 (LNYSIDFGICIFCGNCVEYCPTNCLSMTEE). [4Fe-4S] cluster-binding residues include Cys-64, Cys-67, Cys-70, Cys-74, Cys-104, Cys-107, Cys-110, and Cys-114.

It belongs to the complex I 23 kDa subunit family. In terms of assembly, NDH is composed of at least 16 different subunits, 5 of which are encoded in the nucleus. The cofactor is [4Fe-4S] cluster.

It localises to the plastid. Its subcellular location is the chloroplast thylakoid membrane. It carries out the reaction a plastoquinone + NADH + (n+1) H(+)(in) = a plastoquinol + NAD(+) + n H(+)(out). The enzyme catalyses a plastoquinone + NADPH + (n+1) H(+)(in) = a plastoquinol + NADP(+) + n H(+)(out). In terms of biological role, NDH shuttles electrons from NAD(P)H:plastoquinone, via FMN and iron-sulfur (Fe-S) centers, to quinones in the photosynthetic chain and possibly in a chloroplast respiratory chain. The immediate electron acceptor for the enzyme in this species is believed to be plastoquinone. Couples the redox reaction to proton translocation, and thus conserves the redox energy in a proton gradient. This chain is NAD(P)H-quinone oxidoreductase subunit I, chloroplastic, found in Nymphaea alba (White water-lily).